The primary structure comprises 445 residues: KICSTOR subunit 2 (445 aa).

The protein belongs to the KICS2 family. As to quaternary structure, part of the KICSTOR complex composed of KPTN, ITFG2, KICS2 and SZT2. SZT2 probably serves as a link between the other three proteins in the KICSTOR complex and may mediate the direct interaction with the GATOR complex via GATOR1. The KICSTOR complex interacts directly with the GATOR1 complex and most probably indirectly with the GATOR2 complex in an amino acid-independent manner.

It localises to the lysosome membrane. Its function is as follows. As part of the KICSTOR complex functions in the amino acid-sensing branch of the TORC1 signaling pathway. Recruits, in an amino acid-independent manner, the GATOR1 complex to the lysosomal membranes and allows its interaction with GATOR2 and the RAG GTPases. Functions upstream of the RAG GTPases and is required to negatively regulate mTORC1 signaling in absence of amino acids. In absence of the KICSTOR complex mTORC1 is constitutively localized to the lysosome and activated. The KICSTOR complex is also probably involved in the regulation of mTORC1 by glucose. The chain is KICSTOR subunit 2 from Mus musculus (Mouse).